We begin with the raw amino-acid sequence, 486 residues long: Palmitoleoyl-protein carboxylesterase notum2 (486 aa).

The first 18 residues, 1-18, serve as a signal peptide directing secretion; it reads MRILEIFAILLILKEVRP. N183 is a glycosylation site (N-linked (GlcNAc...) asparagine). Active-site charge relay system residues include S223, D331, and H380.

This sequence belongs to the pectinacetylesterase family. Notum subfamily.

Its subcellular location is the secreted. The enzyme catalyses [Wnt protein]-O-(9Z)-hexadecenoyl-L-serine + H2O = [Wnt protein]-L-serine + (9Z)-hexadecenoate + H(+). In terms of biological role, carboxylesterase that acts as a key negative regulator of the Wnt signaling pathway by specifically mediating depalmitoleoylation of WNT proteins. Serine palmitoleoylation of WNT proteins is required for efficient binding to frizzled receptors. In Xenopus laevis (African clawed frog), this protein is Palmitoleoyl-protein carboxylesterase notum2.